The sequence spans 637 residues: 1-deoxy-D-xylulose-5-phosphate synthase (637 aa).

Thiamine diphosphate contacts are provided by residues histidine 76 and 117–119 (GHS). Aspartate 148 contributes to the Mg(2+) binding site. Residues 149–150 (GA), asparagine 177, tyrosine 294, and glutamate 381 contribute to the thiamine diphosphate site. Residue asparagine 177 coordinates Mg(2+).

This sequence belongs to the transketolase family. DXPS subfamily. Homodimer. Mg(2+) is required as a cofactor. The cofactor is thiamine diphosphate.

It carries out the reaction D-glyceraldehyde 3-phosphate + pyruvate + H(+) = 1-deoxy-D-xylulose 5-phosphate + CO2. Its pathway is metabolic intermediate biosynthesis; 1-deoxy-D-xylulose 5-phosphate biosynthesis; 1-deoxy-D-xylulose 5-phosphate from D-glyceraldehyde 3-phosphate and pyruvate: step 1/1. Its function is as follows. Catalyzes the acyloin condensation reaction between C atoms 2 and 3 of pyruvate and glyceraldehyde 3-phosphate to yield 1-deoxy-D-xylulose-5-phosphate (DXP). This Neisseria gonorrhoeae (strain NCCP11945) protein is 1-deoxy-D-xylulose-5-phosphate synthase.